A 144-amino-acid chain; its full sequence is Large ribosomal subunit protein uL16 (144 aa).

The protein belongs to the universal ribosomal protein uL16 family. As to quaternary structure, part of the 50S ribosomal subunit.

Its function is as follows. Binds 23S rRNA and is also seen to make contacts with the A and possibly P site tRNAs. The polypeptide is Large ribosomal subunit protein uL16 (Porphyromonas gingivalis (strain ATCC 33277 / DSM 20709 / CIP 103683 / JCM 12257 / NCTC 11834 / 2561)).